The primary structure comprises 131 residues: Ponticulin-like protein M (131 aa).

An N-terminal signal peptide occupies residues 1–19 (MKFLSTLILLLSVLALVRG). Ser-106 carries GPI-like-anchor amidated serine lipidation. Residues 107-131 (NSASSPLTTAVLFVVAFAAAIALLL) constitute a propeptide, removed in mature form.

The protein belongs to the ponticulin family. Post-translationally, the GPI-like-anchor contains a phosphoceramide group, rather than a phosphatidyl group.

Its subcellular location is the cell membrane. Binds F-actin and nucleates actin assembly. This chain is Ponticulin-like protein M (ponM), found in Dictyostelium discoideum (Social amoeba).